A 123-amino-acid polypeptide reads, in one-letter code: MAFPTTSAQQADTTRKILEEIQTKKQLLAGGIINLGINTQMSTPQLLGQPTTVTPDFQLGVGGVAANATPTARAAFNPTSSTTLGFFVPQDSYFGNSFLPVLPRLEPLPSSIATPPATPINNK.

Belongs to the SOSS-C family.

The sequence is that of SOSS complex subunit C homolog from Drosophila ananassae (Fruit fly).